A 337-amino-acid chain; its full sequence is CMP-sialic acid transporter (337 aa).

At 1 to 9 the chain is on the cytoplasmic side; sequence MAAPRDNVT. The helical transmembrane segment at 10-30 threads the bilayer; it reads LLFKLYCLAVMTLMAAVYTIA. Over 31 to 45 the chain is Lumenal; sequence LRYTRTSDKELYFST. A helical transmembrane segment spans residues 46–64; sequence TAVCITEVIKLLLSVGILA. K55 serves as a coordination point for CMP-N-acetyl-beta-neuraminate. The Cytoplasmic segment spans residues 65–87; sequence KETGSLGRFKASLRENVLGSPKE. Residues 88–108 traverse the membrane as a helical segment; sequence LLKLSVPSLVYAVQNNMAFLA. 101–102 lines the CMP-N-acetyl-beta-neuraminate pocket; sequence QN. The Lumenal portion of the chain corresponds to 109 to 114; sequence LSNLDA. The helical transmembrane segment at 115 to 135 threads the bilayer; sequence AVYQVTYQLKIPCTALCTVLM. 117–124 provides a ligand contact to CMP-N-acetyl-beta-neuraminate; that stretch reads YQVTYQLK. Over 136-141 the chain is Cytoplasmic; sequence LNRTLS. Residues 142 to 160 form a helical membrane-spanning segment; sequence KLQWVSVFMLCAGVTLVQW. The Lumenal portion of the chain corresponds to 161–175; it reads KPAQATKVVVEQNPL. A helical transmembrane segment spans residues 176-196; that stretch reads LGFGAIAIAVLCSGFAGVYFE. S188 provides a ligand contact to CMP-N-acetyl-beta-neuraminate. Over 197-209 the chain is Cytoplasmic; sequence KVLKSSDTSLWVR. 210–214 lines the CMP-N-acetyl-beta-neuraminate pocket; it reads NIQMY. Residues 210–228 traverse the membrane as a helical segment; it reads NIQMYLSGIIVTLAGVYLS. Over 229–243 the chain is Lumenal; sequence DGAEIKEKGFFYGYT. Residues 244–262 traverse the membrane as a helical segment; the sequence is YYVWFVIFLASVGGLYTSV. Residues 263-269 lie on the Cytoplasmic side of the membrane; sequence VVKYTDN. A helical membrane pass occupies residues 270-288; the sequence is IMKGFSAAAAIVLSTIASV. Residue K272 participates in CMP-N-acetyl-beta-neuraminate binding. At 289 to 296 the chain is on the lumenal side; sequence MLFGLQIT. Residues 297–315 form a helical membrane-spanning segment; that stretch reads LTFALGTLLVCVSIYLYGL. The Cytoplasmic segment spans residues 316-337; that stretch reads PRQDTTSIQQGETASKERVIGV. Positions 316-337 are disordered; sequence PRQDTTSIQQGETASKERVIGV.

It belongs to the nucleotide-sugar transporter family. SLC35A subfamily. In terms of assembly, monomer.

Its subcellular location is the golgi apparatus membrane. The protein resides in the golgi apparatus. It catalyses the reaction CMP-N-acetyl-beta-neuraminate(in) + CMP(out) = CMP-N-acetyl-beta-neuraminate(out) + CMP(in). It carries out the reaction CMP-N-acetyl-beta-neuraminate(in) + AMP(out) = CMP-N-acetyl-beta-neuraminate(out) + AMP(in). The catalysed reaction is CDP-L-ribitol(in) + CDP(out) = CDP-L-ribitol(out) + CDP(in). The enzyme catalyses UMP(out) + CMP-N-acetyl-beta-neuraminate(in) = UMP(in) + CMP-N-acetyl-beta-neuraminate(out). In terms of biological role, transports CMP-sialic acid from the cytosol into the Golgi apparatus, functioning as an antiporter that exchanges CMP-sialic acid for CMP. Binds both CMP-sialic acid and free CMP, but has higher affinity for free CMP. Also able to exchange CMP-sialic acid for AMP and UMP. Also mediates the transport of CDP-ribitol. This Homo sapiens (Human) protein is CMP-sialic acid transporter.